Consider the following 157-residue polypeptide: SsrA-binding protein (157 aa).

The protein belongs to the SmpB family.

It is found in the cytoplasm. Required for rescue of stalled ribosomes mediated by trans-translation. Binds to transfer-messenger RNA (tmRNA), required for stable association of tmRNA with ribosomes. tmRNA and SmpB together mimic tRNA shape, replacing the anticodon stem-loop with SmpB. tmRNA is encoded by the ssrA gene; the 2 termini fold to resemble tRNA(Ala) and it encodes a 'tag peptide', a short internal open reading frame. During trans-translation Ala-aminoacylated tmRNA acts like a tRNA, entering the A-site of stalled ribosomes, displacing the stalled mRNA. The ribosome then switches to translate the ORF on the tmRNA; the nascent peptide is terminated with the 'tag peptide' encoded by the tmRNA and targeted for degradation. The ribosome is freed to recommence translation, which seems to be the essential function of trans-translation. In Aquifex aeolicus (strain VF5), this protein is SsrA-binding protein.